The primary structure comprises 345 residues: Ephrin-B1 (345 aa).

Residues 1 to 24 (MARPGQRWLSKWLVAMVVLTLCRL) form the signal peptide. At 25 to 236 (ATPLAKNLEP…GDSDSFFNSK (212 aa)) the chain is on the extracellular side. Residues 30–164 (KNLEPVSWSS…TRTMKIVMKV (135 aa)) enclose the Ephrin RBD domain. Intrachain disulfides connect cysteine 64–cysteine 101 and cysteine 89–cysteine 153. An N-linked (GlcNAc...) asparagine glycan is attached at asparagine 139. A disordered region spans residues 169–227 (NAVTPEQLTTSRPSKESDNTVKTATQAPGRGSQGDSDGKHETVNQEEKSGPGAGGGGSG). Over residues 204–217 (SDGKHETVNQEEKS) the composition is skewed to basic and acidic residues. The chain crosses the membrane as a helical span at residues 237–257 (VALFAAVGAGCVIFLLIIIFL). Topologically, residues 258–345 (TVLLLKLRKR…QSPANIYYKV (88 aa)) are cytoplasmic. A Nuclear localization signal motif is present at residues 259 to 272 (VLLLKLRKRHRKHT). The tract at residues 262–293 (LKLRKRHRKHTQQRAAALSLSTLASPKGGSGT) is interaction with ZHX2. Phosphoserine is present on residues serine 280 and serine 286. The PDZ-binding signature appears at 343-345 (YKV).

It belongs to the ephrin family. In terms of assembly, interacts (via PDZ-binding motif) with GRIP1 and GRIP2 (via PDZ domain 6). Interacts with TLE1. The intracellular domain peptide interacts with ZHX2; the interaction enhances ZHX2 transcriptional repression activity. Inducible phosphorylation of tyrosine residues in the cytoplasmic domain. In terms of processing, proteolytically processed. The ectodomain is cleaved, probably by a metalloprotease, to produce a membrane-tethered C-terminal fragment. This fragment is then further processed by the gamma-secretase complex to yield a soluble intracellular domain peptide which can translocate to the nucleus. The intracellular domain peptide is highly labile suggesting that it is targeted for degradation by the proteasome. As to expression, expressed on lateral floor plate cells, specifically on commissural axon segments that have passed through the floor plate. Expressed in cells of the retinal ganglion cell layer during retinal axon guidance to the optic disk. Expressed in myogenic progenitor cells.

The protein localises to the cell membrane. The protein resides in the membrane raft. Its subcellular location is the nucleus. Cell surface transmembrane ligand for Eph receptors, a family of receptor tyrosine kinases which are crucial for migration, repulsion and adhesion during neuronal, vascular and epithelial development. Binding to Eph receptors residing on adjacent cells leads to contact-dependent bidirectional signaling into neighboring cells. Shows high affinity for the receptor tyrosine kinase EPHB1/ELK. Can also bind EPHB2 and EPHB3. Binds to, and induces the collapse of, commissural axons/growth cones in vitro. May play a role in constraining the orientation of longitudinally projecting axons. This chain is Ephrin-B1 (Efnb1), found in Mus musculus (Mouse).